Reading from the N-terminus, the 793-residue chain is Cation channel sperm-associated auxiliary subunit delta (793 aa).

Residues 1–20 (MLMLMLVAAVTMWLRPLVTA) form the signal peptide. The Extracellular portion of the chain corresponds to 21 to 725 (QPLCRARTVR…AFPVQLVSAG (705 aa)). Intrachain disulfides connect C24–C370, C60–C146, C145–C153, C388–C497, C511–C703, C526–C573, and C625–C653. N-linked (GlcNAc...) asparagine glycosylation is present at N128. Residues N231, N241, N473, N539, and N631 are each glycosylated (N-linked (GlcNAc...) asparagine). The helical transmembrane segment at 726-747 (VVMVLLISSILGSVWLAYMIPR) threads the bilayer. Residues 748–793 (LLRTARGRRMTSFVAQLYGRCKTVCQFRASATARTGSKPMGRHRSS) are Cytoplasmic-facing.

This sequence belongs to the CATSPERD family. Component of the CatSper complex or CatSpermasome composed of the core pore-forming members CATSPER1, CATSPER2, CATSPER3 and CATSPER4 as well as auxiliary members CATSPERB, CATSPERG, CATSPERD, CATSPERE, CATSPERZ, C2CD6/CATSPERT, TMEM249, TMEM262 and EFCAB9. HSPA1 may be an additional auxiliary complex member. The core complex members CATSPER1, CATSPER2, CATSPER3 and CATSPER4 form a heterotetrameric channel. The auxiliary CATSPERB, CATSPERG, CATSPERD and CATSPERE subunits form a pavilion-like structure over the pore which stabilizes the complex through interactions with CATSPER4, CATSPER3, CATSPER1 and CATSPER2 respectively. TMEM262/CATSPERH interacts with CATSPERB, further stabilizing the complex. C2CD6/CATSPERT interacts at least with CATSPERD and is required for targeting the CatSper complex in the flagellar membrane.

It is found in the cell projection. The protein resides in the cilium. It localises to the flagellum membrane. Its function is as follows. Auxiliary component of the CatSper complex, a complex involved in sperm cell hyperactivation. Sperm cell hyperactivation is needed for sperm motility which is essential late in the preparation of sperm for fertilization. Required for CATSPER1 stability before intraflagellar transport and/or incorporation of the CatSper complex channel into the flagellar membrane. The chain is Cation channel sperm-associated auxiliary subunit delta from Macaca fascicularis (Crab-eating macaque).